The chain runs to 414 residues: Isocitrate dehydrogenase [NADP] cytoplasmic (414 aa).

An N-acetylserine modification is found at Ser2. Position 42 is a phosphotyrosine (Tyr42). 75–77 (TIT) is an NADP(+) binding site. Thr77 is a binding site for substrate. An N6-acetyllysine modification is found at Lys81. Residue Arg82 coordinates NADP(+). Residues 94-100 (SPNGTIR) and Arg109 contribute to the substrate site. Lys126 is modified (N6-succinyllysine). Positions 132 and 212 each coordinate substrate. Lys224 and Lys233 each carry N6-acetyllysine. Mn(2+) is bound at residue Asp252. An NADP(+)-binding site is contributed by Lys260. Residues Asp275 and Asp279 each coordinate Mn(2+). Position 310–315 (310–315 (GTVTRH)) interacts with NADP(+). N6-acetyllysine is present on Lys321. Residue Asn328 participates in NADP(+) binding. The residue at position 389 (Ser389) is a Phosphoserine. Residue Lys400 is modified to N6-succinyllysine.

Belongs to the isocitrate and isopropylmalate dehydrogenases family. In terms of assembly, homodimer. Requires Mg(2+) as cofactor. It depends on Mn(2+) as a cofactor. Acetylation at Lys-374 dramatically reduces catalytic activity.

It is found in the cytoplasm. The protein localises to the cytosol. It catalyses the reaction D-threo-isocitrate + NADP(+) = 2-oxoglutarate + CO2 + NADPH. Catalyzes the NADP(+)-dependent oxidative decarboxylation of isocitrate (D-threo-isocitrate) to 2-ketoglutarate (2-oxoglutarate), which is required by other enzymes such as the phytanoyl-CoA dioxygenase. Plays a critical role in the generation of NADPH, an important cofactor in many biosynthesis pathways. May act as a corneal epithelial crystallin and may be involved in maintaining corneal epithelial transparency. The protein is Isocitrate dehydrogenase [NADP] cytoplasmic (IDH1) of Ovis aries (Sheep).